Here is a 301-residue protein sequence, read N- to C-terminus: MADNSSDEYEEDNKEKKKPSQLTPQQGFSENDDDDDDDSSETDSDDDDDDEEHGAPLEGAYDPADYEHLPVSAEIKELFEYISRYTPQLIDLDHKLKPFIPDFIPAVGDIDAFLKVPRPDGKPDHLGLLVLDEPSTKQSDPTVLSLWLTENSKQHNITQHMKVKSLEDAEKNPKAIDTWIESISELHRSKPPATVHYTRPMPDIDTLMQEWSPEFEELLGKVSLPTVEIDCSLAEYIDMICAILDIPFYKSRIQSLHLLFSLYSEFKNSQHFKALAEGKKTFTPPSNSASQAGDAETLSFL.

Acidic residues-rich tracts occupy residues 1 to 12 and 30 to 52; these read MADNSSDEYEED and ENDD…DDEE. Residues 1–66 are disordered; sequence MADNSSDEYE…LEGAYDPADY (66 aa). The residue at position 283 (Thr-283) is a Phosphothreonine.

This sequence belongs to the IFT46 family. Component of the IFT complex B, at least composed of IFT20, IFT22, IFT25, IFT27, IFT46, IFT52, TRAF3IP1/IFT54, IFT57, IFT74, IFT80, IFT81, and IFT88. Interacts with IFT57, IFT88 and DAW1. Interacts with ARL13B. Interacts with IFT56. Interacts with TTC25. Interacts with IFT70B.

It localises to the cytoplasm. Its subcellular location is the cytoskeleton. The protein localises to the cilium basal body. The protein resides in the cell projection. It is found in the cilium. In terms of biological role, forms part of a complex involved in intraflagellar transport (IFT), the bi-directional movement of particles required for the assembly, maintenance and functioning of primary cilia. May play a role in chondrocyte maturation and skeletogenesis. The sequence is that of Intraflagellar transport protein 46 homolog (Ift46) from Rattus norvegicus (Rat).